Here is a 165-residue protein sequence, read N- to C-terminus: Lithostathine (165 aa).

Positions 1–21 (MTRNKYFILLSCLMVLSPSQG) are cleaved as a signal peptide. Gln-22 carries the post-translational modification Pyrrolidone carboxylic acid. The C-type lectin domain occupies 33–163 (ITCPEGSNAY…DAQLSFVCKF (131 aa)). 3 disulfides stabilise this stretch: Cys-35-Cys-46, Cys-63-Cys-161, and Cys-136-Cys-153. A glycan (N-linked (GlcNAc...) asparagine) is linked at Asn-129.

As to expression, expressed only in regenerating islets, but not in normal pancreatic islets, insulinomas or regenerating liver.

The protein localises to the secreted. Might act as an inhibitor of spontaneous calcium carbonate precipitation. This is Lithostathine (Reg1) from Rattus norvegicus (Rat).